Here is an 84-residue protein sequence, read N- to C-terminus: Small ribosomal subunit protein bS18 (84 aa).

This sequence belongs to the bacterial ribosomal protein bS18 family. In terms of assembly, part of the 30S ribosomal subunit. Forms a tight heterodimer with protein bS6.

Its function is as follows. Binds as a heterodimer with protein bS6 to the central domain of the 16S rRNA, where it helps stabilize the platform of the 30S subunit. The chain is Small ribosomal subunit protein bS18 from Mycoplasma mobile (strain ATCC 43663 / 163K / NCTC 11711) (Mesomycoplasma mobile).